The primary structure comprises 165 residues: UPF0254 protein MmarC5_0742 (165 aa).

Belongs to the UPF0254 family.

The chain is UPF0254 protein MmarC5_0742 from Methanococcus maripaludis (strain C5 / ATCC BAA-1333).